The primary structure comprises 429 residues: Adenylosuccinate synthetase (429 aa).

GTP-binding positions include Gly12–Lys18 and Gly40–Thr42. Asp13 functions as the Proton acceptor in the catalytic mechanism. Residues Asp13 and Gly40 each contribute to the Mg(2+) site. IMP-binding positions include Asp13–Lys16, Asn38–His41, Thr128, Arg142, Gln223, Thr238, and Arg302. The Proton donor role is filled by His41. Substrate is bound at residue Ala298–Arg304. GTP contacts are provided by residues Arg304, Lys330–Asp332, and Gly412–Gly414.

The protein belongs to the adenylosuccinate synthetase family. In terms of assembly, homodimer. Mg(2+) is required as a cofactor.

It localises to the cytoplasm. The enzyme catalyses IMP + L-aspartate + GTP = N(6)-(1,2-dicarboxyethyl)-AMP + GDP + phosphate + 2 H(+). It participates in purine metabolism; AMP biosynthesis via de novo pathway; AMP from IMP: step 1/2. Functionally, plays an important role in the de novo pathway of purine nucleotide biosynthesis. Catalyzes the first committed step in the biosynthesis of AMP from IMP. The sequence is that of Adenylosuccinate synthetase from Tropheryma whipplei (strain TW08/27) (Whipple's bacillus).